Here is a 95-residue protein sequence, read N- to C-terminus: MKITPDDIRHVAKLARLDIAETDINAFVSQIGEILDYVDTLNQVATENVEPMAHAISLTNAFREDTVREAGPVEKILNNAPAAADNMFCVPKIIE.

The protein belongs to the GatC family. Heterotrimer of A, B and C subunits.

The catalysed reaction is L-glutamyl-tRNA(Gln) + L-glutamine + ATP + H2O = L-glutaminyl-tRNA(Gln) + L-glutamate + ADP + phosphate + H(+). It catalyses the reaction L-aspartyl-tRNA(Asn) + L-glutamine + ATP + H2O = L-asparaginyl-tRNA(Asn) + L-glutamate + ADP + phosphate + 2 H(+). Functionally, allows the formation of correctly charged Asn-tRNA(Asn) or Gln-tRNA(Gln) through the transamidation of misacylated Asp-tRNA(Asn) or Glu-tRNA(Gln) in organisms which lack either or both of asparaginyl-tRNA or glutaminyl-tRNA synthetases. The reaction takes place in the presence of glutamine and ATP through an activated phospho-Asp-tRNA(Asn) or phospho-Glu-tRNA(Gln). The sequence is that of Aspartyl/glutamyl-tRNA(Asn/Gln) amidotransferase subunit C from Desulfosudis oleivorans (strain DSM 6200 / JCM 39069 / Hxd3) (Desulfococcus oleovorans).